Here is a 64-residue protein sequence, read N- to C-terminus: Bowman-Birk type trypsin inhibitor TI1 (64 aa).

5 disulfide bridges follow: C9/C61, C10/C25, C15/C23, C32/C39, and C36/C49.

This sequence belongs to the Bowman-Birk serine protease inhibitor family.

The polypeptide is Bowman-Birk type trypsin inhibitor TI1 (Coix lacryma-jobi (Job's tears)).